The chain runs to 177 residues: Large ribosomal subunit protein uL6 (177 aa).

The protein belongs to the universal ribosomal protein uL6 family. Part of the 50S ribosomal subunit.

Its function is as follows. This protein binds to the 23S rRNA, and is important in its secondary structure. It is located near the subunit interface in the base of the L7/L12 stalk, and near the tRNA binding site of the peptidyltransferase center. This chain is Large ribosomal subunit protein uL6, found in Methylorubrum extorquens (strain CM4 / NCIMB 13688) (Methylobacterium extorquens).